A 66-amino-acid chain; its full sequence is KEGYIVNYHDGCKYECYKLGDNDYCLRECKARYGKGAGGYCYAFGCWCTHLYEQAVVWPLPKKTCN.

One can recognise an LCN-type CS-alpha/beta domain in the interval Lys1–Asn66. 4 cysteine pairs are disulfide-bonded: Cys12–Cys65, Cys16–Cys41, Cys25–Cys46, and Cys29–Cys48. Asn66 is subject to Asparagine amide.

The protein belongs to the long (4 C-C) scorpion toxin superfamily. Sodium channel inhibitor family. Beta subfamily. Expressed by the venom gland.

It localises to the secreted. Its function is as follows. Beta toxins bind voltage-independently at site-4 of sodium channels and shift the voltage of activation toward more negative potentials thereby affecting sodium channel activation and promoting spontaneous and repetitive firing. A mixture of Cbo2 and Cbo3 is weakly active on the human voltage-gated sodium channels Nav1.4/SCN4A and Nav1.6/SCN8A when tested at 200 nM. In vivo, is toxic to mice when intraperitoneally injected. This is Beta-toxin Cbo3 from Centruroides bonito (Scorpion).